Here is a 174-residue protein sequence, read N- to C-terminus: NADH-ubiquinone oxidoreductase chain 6 (174 aa).

The next 6 membrane-spanning stretches (helical) occupy residues 1–21 (MTYA…GFSS), 24–44 (SPIY…AVIL), 47–67 (GGGY…MVVF), 86–106 (VEVL…VLWV), 111–131 (GVVV…EGEG), and 151–171 (WLVV…IEIA).

Belongs to the complex I subunit 6 family. As to quaternary structure, core subunit of respiratory chain NADH dehydrogenase (Complex I) which is composed of 45 different subunits.

Its subcellular location is the mitochondrion inner membrane. It carries out the reaction a ubiquinone + NADH + 5 H(+)(in) = a ubiquinol + NAD(+) + 4 H(+)(out). Its function is as follows. Core subunit of the mitochondrial membrane respiratory chain NADH dehydrogenase (Complex I) which catalyzes electron transfer from NADH through the respiratory chain, using ubiquinone as an electron acceptor. Essential for the catalytic activity and assembly of complex I. This chain is NADH-ubiquinone oxidoreductase chain 6 (MT-ND6), found in Pongo abelii (Sumatran orangutan).